The primary structure comprises 589 residues: Mini-chromosome maintenance complex-binding protein (589 aa).

The interval V163–A211 is disordered. Over residues A193–G207 the composition is skewed to polar residues.

The protein belongs to the MCMBP family. In terms of assembly, interacts with the MCM complex.

It localises to the nucleus. Functionally, associated component of the MCM complex that acts as a regulator of DNA replication. Binds to the MCM complex during late S phase and may act by promoting the disassembly of the MCM complex from chromatin. Required for sister chromatid cohesion. In Arabidopsis thaliana (Mouse-ear cress), this protein is Mini-chromosome maintenance complex-binding protein (ETG1).